We begin with the raw amino-acid sequence, 89 residues long: Small ribosomal subunit protein uS15 (89 aa).

Belongs to the universal ribosomal protein uS15 family. As to quaternary structure, part of the 30S ribosomal subunit. Forms a bridge to the 50S subunit in the 70S ribosome, contacting the 23S rRNA.

Its function is as follows. One of the primary rRNA binding proteins, it binds directly to 16S rRNA where it helps nucleate assembly of the platform of the 30S subunit by binding and bridging several RNA helices of the 16S rRNA. Functionally, forms an intersubunit bridge (bridge B4) with the 23S rRNA of the 50S subunit in the ribosome. The protein is Small ribosomal subunit protein uS15 of Mannheimia succiniciproducens (strain KCTC 0769BP / MBEL55E).